Here is a 344-residue protein sequence, read N- to C-terminus: Nicotinate-nucleotide--dimethylbenzimidazole phosphoribosyltransferase (344 aa).

E311 (proton acceptor) is an active-site residue.

Belongs to the CobT family.

The enzyme catalyses 5,6-dimethylbenzimidazole + nicotinate beta-D-ribonucleotide = alpha-ribazole 5'-phosphate + nicotinate + H(+). The protein operates within nucleoside biosynthesis; alpha-ribazole biosynthesis; alpha-ribazole from 5,6-dimethylbenzimidazole: step 1/2. In terms of biological role, catalyzes the synthesis of alpha-ribazole-5'-phosphate from nicotinate mononucleotide (NAMN) and 5,6-dimethylbenzimidazole (DMB). The protein is Nicotinate-nucleotide--dimethylbenzimidazole phosphoribosyltransferase of Aromatoleum aromaticum (strain DSM 19018 / LMG 30748 / EbN1) (Azoarcus sp. (strain EbN1)).